We begin with the raw amino-acid sequence, 591 residues long: CTP synthase 1 (591 aa).

At lysine 100 the chain carries N6-acetyllysine. The region spanning 300-554 (SIALVGKYTK…LASVGRLSHY (255 aa)) is the Glutamine amidotransferase type-1 domain. Residues cysteine 399, histidine 526, and glutamate 528 each act as for GATase activity in the active site. Residues serine 562, serine 568, serine 571, serine 573, serine 574, serine 575, serine 578, and serine 587 each carry the phosphoserine modification. The segment at 562 to 591 (SPRDTYSDRSGSSSPDSEITELKFPSINHD) is disordered. Low complexity predominate over residues 569–578 (DRSGSSSPDS).

Belongs to the CTP synthase family. As to expression, widely expressed.

Its subcellular location is the cytoplasm. It is found in the cytosol. The enzyme catalyses UTP + L-glutamine + ATP + H2O = CTP + L-glutamate + ADP + phosphate + 2 H(+). It participates in pyrimidine metabolism; CTP biosynthesis via de novo pathway; CTP from UDP: step 2/2. Activated by GTP and inhibited by CTP. Functionally, this enzyme is involved in the de novo synthesis of CTP, a precursor of DNA, RNA and phospholipids. Catalyzes the ATP-dependent amination of UTP to CTP with either L-glutamine or ammonia as a source of nitrogen. This enzyme and its product, CTP, play a crucial role in the proliferation of activated lymphocytes and therefore in immunity. This Homo sapiens (Human) protein is CTP synthase 1.